Reading from the N-terminus, the 320-residue chain is Cytochrome f (320 aa).

Residues 1–35 (MQTRKTFSWIKEQIARSISVSLLIYIITRTSISSA) form the signal peptide. Tyrosine 36, cysteine 56, cysteine 59, and histidine 60 together coordinate heme. Residues 286–306 (VQGLLFFLASVILAQIFLVLK) traverse the membrane as a helical segment.

Belongs to the cytochrome f family. As to quaternary structure, the 4 large subunits of the cytochrome b6-f complex are cytochrome b6, subunit IV (17 kDa polypeptide, petD), cytochrome f and the Rieske protein, while the 4 small subunits are PetG, PetL, PetM and PetN. The complex functions as a dimer. Heme serves as cofactor.

The protein localises to the plastid. Its subcellular location is the chloroplast thylakoid membrane. In terms of biological role, component of the cytochrome b6-f complex, which mediates electron transfer between photosystem II (PSII) and photosystem I (PSI), cyclic electron flow around PSI, and state transitions. The protein is Cytochrome f of Jasminum nudiflorum (Winter jasmine).